We begin with the raw amino-acid sequence, 281 residues long: MQNSLQVAQVIISALPYIQKFRNKIFVVKYGGSAQIDDTLKNDFVRDIALLQLVGCKVVVVHGGGKKINSYLDRLHIKSEFVDGLRVTDKEAMEIVEMVLSGNINKEITALLNKNGARAIGVSGKDANLLKARILNNGKYGFVGEIERVNTYVLNGLLENGLIPVVAPVATDDEANSYNINADLCASKIASALKAERVIFLTDTRGILDKDGNLISKLNEAHITALKEDGTINGGMIPKVDAALECVKNGVANAHILDGRLPHSLLLELFTDDGIGTMIKG.

Substrate-binding positions include 64 to 65 (GG), R86, and N179.

This sequence belongs to the acetylglutamate kinase family. ArgB subfamily.

The protein localises to the cytoplasm. It carries out the reaction N-acetyl-L-glutamate + ATP = N-acetyl-L-glutamyl 5-phosphate + ADP. It participates in amino-acid biosynthesis; L-arginine biosynthesis; N(2)-acetyl-L-ornithine from L-glutamate: step 2/4. Catalyzes the ATP-dependent phosphorylation of N-acetyl-L-glutamate. This is Acetylglutamate kinase from Campylobacter curvus (strain 525.92).